Here is a 1279-residue protein sequence, read N- to C-terminus: Talin-A (1279 aa).

The region spanning 84 to 365 (RPQKFKLLDG…GYIEIIMKAR (282 aa)) is the FERM domain.

The protein localises to the cytoplasm. It localises to the cytoskeleton. It is found in the cell cortex. Actin-binding protein that may be involved in the control of cell motility and chemotaxis. The protein is Talin-A (talA) of Dictyostelium discoideum (Social amoeba).